The chain runs to 964 residues: Protein translocase subunit SecA (964 aa).

Residues glutamine 86, 104 to 108, and aspartate 494 each bind ATP; that span reads GEGKT. Residues 848–964 form a disordered region; sequence AESADTIAVA…YKMCHGQNEK (117 aa). A compositionally biased stretch (acidic residues) spans 871-882; the sequence is AEGEVEEEDEDT. Over residues 889 to 900 the composition is skewed to low complexity; it reads AESAAASGAGES. Residues cysteine 947, cysteine 949, cysteine 958, and histidine 959 each contribute to the Zn(2+) site.

The protein belongs to the SecA family. As to quaternary structure, monomer and homodimer. Part of the essential Sec protein translocation apparatus which comprises SecA, SecYEG and auxiliary proteins SecDF. Other proteins may also be involved. Zn(2+) is required as a cofactor.

The protein localises to the cell membrane. It localises to the cytoplasm. The enzyme catalyses ATP + H2O + cellular proteinSide 1 = ADP + phosphate + cellular proteinSide 2.. Part of the Sec protein translocase complex. Interacts with the SecYEG preprotein conducting channel. Has a central role in coupling the hydrolysis of ATP to the transfer of proteins into and across the cell membrane, serving as an ATP-driven molecular motor driving the stepwise translocation of polypeptide chains across the membrane. The sequence is that of Protein translocase subunit SecA from Bifidobacterium longum (strain DJO10A).